The sequence spans 1372 residues: DNA-directed RNA polymerase subunit beta (1372 aa).

It belongs to the RNA polymerase beta chain family. As to quaternary structure, the RNAP catalytic core consists of 2 alpha, 1 beta, 1 beta' and 1 omega subunit. When a sigma factor is associated with the core the holoenzyme is formed, which can initiate transcription.

The catalysed reaction is RNA(n) + a ribonucleoside 5'-triphosphate = RNA(n+1) + diphosphate. In terms of biological role, DNA-dependent RNA polymerase catalyzes the transcription of DNA into RNA using the four ribonucleoside triphosphates as substrates. This chain is DNA-directed RNA polymerase subunit beta, found in Bradyrhizobium sp. (strain ORS 278).